We begin with the raw amino-acid sequence, 423 residues long: Methanol:N,N-dimethyl-4-nitrosoaniline oxidoreductase (423 aa).

The protein belongs to the iron-containing alcohol dehydrogenase family. As to quaternary structure, homodecamer. It depends on Mg(2+) as a cofactor. Requires Zn(2+) as cofactor. NADPH is required as a cofactor.

The catalysed reaction is methanol + A = formaldehyde + AH2. In terms of biological role, catalyzes the oxidation of methanol to yield formaldehyde. While the in vivo electron acceptor is not known, N,N-dimethyl-4-nitrosoaniline (NDMA) can serve this function in vitro and is reduced to 4-(hydroxylamino)-N,N-dimethylaniline. It is also able to use ethanol and formaldehyde with an activity comparable to methanol, and has a weak activity with methylamine as substrate. In Mycobacterium sp. (strain DSM 3803 / JC1), this protein is Methanol:N,N-dimethyl-4-nitrosoaniline oxidoreductase.